The sequence spans 117 residues: Large ribosomal subunit protein eL8 (117 aa).

This sequence belongs to the eukaryotic ribosomal protein eL8 family. In terms of assembly, part of the 50S ribosomal subunit. Part of the RNase P complex.

The protein localises to the cytoplasm. The enzyme catalyses Endonucleolytic cleavage of RNA, removing 5'-extranucleotides from tRNA precursor.. In terms of biological role, multifunctional RNA-binding protein that recognizes the K-turn motif in ribosomal RNA, the RNA component of RNase P, box H/ACA, box C/D and box C'/D' sRNAs. Part of ribonuclease P, a protein complex that generates mature tRNA molecules by cleaving their 5'-ends, this subunit dramatically stimulates RNase P activity. This Methanococcus maripaludis (strain DSM 14266 / JCM 13030 / NBRC 101832 / S2 / LL) protein is Large ribosomal subunit protein eL8.